The following is an 86-amino-acid chain: Cytochrome c-555 (86 aa).

Heme c is bound by residues Cys14, Cys17, His18, and Met60.

In terms of processing, binds 1 heme c group covalently per subunit.

In terms of biological role, this basic c-type monoheme cytochrome has been found exclusively in the green photosynthetic bacteria, although its role in bacterial photosynthesis is not established. It has an unusually low redox potential compared with mitochondrial cytochrome c. It is reactive with cytochrome c oxidases but not with reductases. This Chlorobaculum thiosulfatiphilum (Chlorobium limicola f.sp. thiosulfatophilum) protein is Cytochrome c-555.